The chain runs to 271 residues: Urease accessory protein UreD (271 aa).

This sequence belongs to the UreD family. UreD, UreF and UreG form a complex that acts as a GTP-hydrolysis-dependent molecular chaperone, activating the urease apoprotein by helping to assemble the nickel containing metallocenter of UreC. The UreE protein probably delivers the nickel.

It is found in the cytoplasm. Functionally, required for maturation of urease via the functional incorporation of the urease nickel metallocenter. This is Urease accessory protein UreD from Haemophilus influenzae (strain 86-028NP).